The chain runs to 197 residues: GTP cyclohydrolase-2 (197 aa).

50 to 54 (RIHSE) lines the GTP pocket. The Zn(2+) site is built by cysteine 55, cysteine 66, and cysteine 68. GTP-binding positions include glutamine 71, 93–95 (EGR), and threonine 115. Aspartate 127 acts as the Proton acceptor in catalysis. Arginine 129 acts as the Nucleophile in catalysis. Residues threonine 150 and lysine 155 each contribute to the GTP site.

It belongs to the GTP cyclohydrolase II family. It depends on Zn(2+) as a cofactor.

It carries out the reaction GTP + 4 H2O = 2,5-diamino-6-hydroxy-4-(5-phosphoribosylamino)-pyrimidine + formate + 2 phosphate + 3 H(+). Its pathway is cofactor biosynthesis; riboflavin biosynthesis; 5-amino-6-(D-ribitylamino)uracil from GTP: step 1/4. In terms of biological role, catalyzes the conversion of GTP to 2,5-diamino-6-ribosylamino-4(3H)-pyrimidinone 5'-phosphate (DARP), formate and pyrophosphate. The polypeptide is GTP cyclohydrolase-2 (Neisseria meningitidis serogroup A / serotype 4A (strain DSM 15465 / Z2491)).